The chain runs to 171 residues: MNLKDHIREVPDFPKPGILFYDISTLLADPDAWQVTMGRMAKVVAPRLPDVLAGIESRGFLVAAPLALKLGLGFVMVRKKGKLPGATVRHEYALEYGTDTVEVQEGAVLPGQRVVILDDLLATGGTLNAASELLGKMGANVVGAACIIELSFLKGRERTKVPIDSLVAYDS.

Belongs to the purine/pyrimidine phosphoribosyltransferase family. In terms of assembly, homodimer.

The protein localises to the cytoplasm. The catalysed reaction is AMP + diphosphate = 5-phospho-alpha-D-ribose 1-diphosphate + adenine. Its pathway is purine metabolism; AMP biosynthesis via salvage pathway; AMP from adenine: step 1/1. Catalyzes a salvage reaction resulting in the formation of AMP, that is energically less costly than de novo synthesis. The chain is Adenine phosphoribosyltransferase from Rhodospirillum rubrum (strain ATCC 11170 / ATH 1.1.1 / DSM 467 / LMG 4362 / NCIMB 8255 / S1).